A 309-amino-acid polypeptide reads, in one-letter code: D-alanine--D-alanine ligase (309 aa).

The 203-residue stretch at 104–306 (KLLWQSFNLP…YQILVQKILE (203 aa)) folds into the ATP-grasp domain. 137–192 (ISLLGLPIIVKPNQEGSSIGITIVYSYETLYKACKTAFIFDNSILIEKFIYGEEYT) is an ATP binding site. Mg(2+)-binding residues include aspartate 260, glutamate 273, and asparagine 275.

The protein belongs to the D-alanine--D-alanine ligase family. Requires Mg(2+) as cofactor. It depends on Mn(2+) as a cofactor.

Its subcellular location is the cytoplasm. The catalysed reaction is 2 D-alanine + ATP = D-alanyl-D-alanine + ADP + phosphate + H(+). It functions in the pathway cell wall biogenesis; peptidoglycan biosynthesis. Functionally, cell wall formation. The protein is D-alanine--D-alanine ligase of Buchnera aphidicola subsp. Baizongia pistaciae (strain Bp).